Consider the following 59-residue polypeptide: Large ribosomal subunit protein bL32 (59 aa).

Over residues 1 to 16 (MAVPKRKTSPSKRGMR) the composition is skewed to basic residues. The disordered stretch occupies residues 1–41 (MAVPKRKTSPSKRGMRRSADALKAPTYIEDKNSGELRRPHH). Residues 28-41 (IEDKNSGELRRPHH) are compositionally biased toward basic and acidic residues.

It belongs to the bacterial ribosomal protein bL32 family.

This chain is Large ribosomal subunit protein bL32, found in Bartonella henselae (strain ATCC 49882 / DSM 28221 / CCUG 30454 / Houston 1) (Rochalimaea henselae).